The primary structure comprises 853 residues: DNA mismatch repair protein MutS (853 aa).

614 to 621 (GPNMGGKS) lines the ATP pocket.

Belongs to the DNA mismatch repair MutS family.

Functionally, this protein is involved in the repair of mismatches in DNA. It is possible that it carries out the mismatch recognition step. This protein has a weak ATPase activity. This is DNA mismatch repair protein MutS from Klebsiella pneumoniae subsp. pneumoniae (strain ATCC 700721 / MGH 78578).